Consider the following 200-residue polypeptide: Lipopolysaccharide core heptose(II)-phosphate phosphatase (200 aa).

A signal peptide spans 1–25 (MLAFCRSSLKSKKYFIILLALAAIA).

The protein belongs to the phosphoglycerate mutase family. Ais subfamily.

It is found in the periplasm. It functions in the pathway bacterial outer membrane biogenesis; lipopolysaccharide metabolism. Catalyzes the dephosphorylation of heptose(II) of the outer membrane lipopolysaccharide core. The protein is Lipopolysaccharide core heptose(II)-phosphate phosphatase of Shigella flexneri serotype 5b (strain 8401).